Reading from the N-terminus, the 118-residue chain is Basic phospholipase A2 nigroxin A (118 aa).

7 disulfide bridges follow: cysteine 11–cysteine 70, cysteine 25–cysteine 117, cysteine 27–cysteine 43, cysteine 42–cysteine 98, cysteine 49–cysteine 91, cysteine 59–cysteine 84, and cysteine 77–cysteine 89. Residues tyrosine 26, glycine 28, and glycine 30 each contribute to the Ca(2+) site. The active site involves histidine 46. Aspartate 47 serves as a coordination point for Ca(2+). The active site involves aspartate 92.

It belongs to the phospholipase A2 family. Group I subfamily. D49 sub-subfamily. Ca(2+) is required as a cofactor. In terms of tissue distribution, expressed by the venom gland.

It localises to the secreted. The catalysed reaction is a 1,2-diacyl-sn-glycero-3-phosphocholine + H2O = a 1-acyl-sn-glycero-3-phosphocholine + a fatty acid + H(+). Functionally, snake venom phospholipase A2 (PLA2) that has only a weak enzymatic activity. It has a myotoxic activity in vivo (dystrophic effect). PLA2 catalyzes the calcium-dependent hydrolysis of the 2-acyl groups in 3-sn-phosphoglycerides. The sequence is that of Basic phospholipase A2 nigroxin A from Micrurus nigrocinctus (Central American coral snake).